Consider the following 435-residue polypeptide: Serine--tRNA ligase (435 aa).

Residues Met48–Ser68 are disordered. Positions Lys49 to Ser68 are enriched in basic and acidic residues. Thr230–Glu232 provides a ligand contact to L-serine. Arg261–Glu263 lines the ATP pocket. Glu284 serves as a coordination point for L-serine. Glu348–Ser351 is a binding site for ATP. Ser383 provides a ligand contact to L-serine.

This sequence belongs to the class-II aminoacyl-tRNA synthetase family. Type-1 seryl-tRNA synthetase subfamily. Homodimer. The tRNA molecule binds across the dimer.

The protein localises to the cytoplasm. It carries out the reaction tRNA(Ser) + L-serine + ATP = L-seryl-tRNA(Ser) + AMP + diphosphate + H(+). The catalysed reaction is tRNA(Sec) + L-serine + ATP = L-seryl-tRNA(Sec) + AMP + diphosphate + H(+). Its pathway is aminoacyl-tRNA biosynthesis; selenocysteinyl-tRNA(Sec) biosynthesis; L-seryl-tRNA(Sec) from L-serine and tRNA(Sec): step 1/1. Its function is as follows. Catalyzes the attachment of serine to tRNA(Ser). Is also able to aminoacylate tRNA(Sec) with serine, to form the misacylated tRNA L-seryl-tRNA(Sec), which will be further converted into selenocysteinyl-tRNA(Sec). In Limosilactobacillus reuteri (strain DSM 20016) (Lactobacillus reuteri), this protein is Serine--tRNA ligase.